The primary structure comprises 54 residues: uncharacterized protein (54 aa).

The N-terminal stretch at methionine 1–serine 23 is a signal peptide.

This is an uncharacterized protein from Acheta domesticus (House cricket).